Consider the following 696-residue polypeptide: Lutropin-choriogonadotropic hormone receptor (696 aa).

Positions 1–27 are cleaved as a signal peptide; it reads MRRRSLALRLLLALLLLPPPLPQTLLG. Over 28–358 the chain is Extracellular; the sequence is APCPEPCSCR…AFNPCEDIMG (331 aa). Asn-99 is a glycosylation site (N-linked (GlcNAc...) asparagine). LRR repeat units follow at residues 122-147, 149-171, 172-196, 198-220, 221-244, and 250-271; these read LPRL…IFSS, FNFI…AFQG, MNNE…AFNG, TLIS…AFRG, ARGP…GLES, and ATSS…LLDA. 2 N-linked (GlcNAc...) asparagine glycosylation sites follow: Asn-174 and Asn-195. Asn-291, Asn-299, and Asn-313 each carry an N-linked (GlcNAc...) asparagine glycan. A Sulfotyrosine modification is found at Tyr-331. Residues 359–386 form a helical membrane-spanning segment; it reads YDFLRVLIWLINILAIMGNVTVLFVLLT. The Cytoplasmic segment spans residues 387 to 395; it reads SHYKLTVPR. A helical membrane pass occupies residues 396–418; it reads FLMCNLSFADFCMGLYLLLIASV. Residues 419–439 lie on the Extracellular side of the membrane; sequence DAQTKGQYYNHAIDWQTGNGC. Cys-439 and Cys-514 are oxidised to a cystine. The chain crosses the membrane as a helical span at residues 440–462; that stretch reads SVAGFFTVFASELSVYTLTVITL. Over 463–482 the chain is Cytoplasmic; the sequence is ERWHTITYAIQLDQKLRLRH. Residues 483 to 505 form a helical membrane-spanning segment; sequence AIPIMLGGWLFSTLIAMLPLVGV. Over 506–525 the chain is Extracellular; that stretch reads SSYMKVSICLPMDVETTLSQ. A helical transmembrane segment spans residues 526–547; it reads VYILTILILNVVAFIIICACYI. Over 548–570 the chain is Cytoplasmic; the sequence is KIYFAVQNPELMATNKDTKIAKK. The helical transmembrane segment at 571–594 threads the bilayer; that stretch reads MAVLIFTDFTCMAPISFFAISAAL. At 595–605 the chain is on the extracellular side; that stretch reads KVPLITVTNSK. A helical transmembrane segment spans residues 606–626; that stretch reads VLLVLFYPVNSCANPFLYAIF. Over 627-696 the chain is Cytoplasmic; that stretch reads TKAFRRDFFL…VMDKTCYKDC (70 aa). S-palmitoyl cysteine attachment occurs at residues Cys-643 and Cys-644.

The protein belongs to the G-protein coupled receptor 1 family. FSH/LSH/TSH subfamily. In terms of processing, sulfated.

Its subcellular location is the cell membrane. Its function is as follows. Receptor for lutropin-choriogonadotropic hormone. The activity of this receptor is mediated by G proteins which activate adenylate cyclase. The protein is Lutropin-choriogonadotropic hormone receptor (LHCGR) of Sus scrofa (Pig).